Consider the following 155-residue polypeptide: 2-C-methyl-D-erythritol 2,4-cyclodiphosphate synthase (155 aa).

3 residues coordinate a divalent metal cation: aspartate 10, histidine 12, and histidine 46. 10–12 (DSH) contributes to the 4-CDP-2-C-methyl-D-erythritol 2-phosphate binding site. 4-CDP-2-C-methyl-D-erythritol 2-phosphate is bound by residues 60 to 62 (DIG), 65 to 69 (FDEND), and lysine 140.

Belongs to the IspF family. Homotrimer. The cofactor is a divalent metal cation.

It catalyses the reaction 4-CDP-2-C-methyl-D-erythritol 2-phosphate = 2-C-methyl-D-erythritol 2,4-cyclic diphosphate + CMP. The protein operates within isoprenoid biosynthesis; isopentenyl diphosphate biosynthesis via DXP pathway; isopentenyl diphosphate from 1-deoxy-D-xylulose 5-phosphate: step 4/6. In terms of biological role, involved in the biosynthesis of isopentenyl diphosphate (IPP) and dimethylallyl diphosphate (DMAPP), two major building blocks of isoprenoid compounds. Catalyzes the conversion of 4-diphosphocytidyl-2-C-methyl-D-erythritol 2-phosphate (CDP-ME2P) to 2-C-methyl-D-erythritol 2,4-cyclodiphosphate (ME-CPP) with a corresponding release of cytidine 5-monophosphate (CMP). The protein is 2-C-methyl-D-erythritol 2,4-cyclodiphosphate synthase of Mycoplasmoides gallisepticum (strain R(low / passage 15 / clone 2)) (Mycoplasma gallisepticum).